A 262-amino-acid polypeptide reads, in one-letter code: Hydroxyethylthiazole kinase (262 aa).

Methionine 50 is a substrate binding site. Residues arginine 125 and threonine 171 each coordinate ATP. A substrate-binding site is contributed by glycine 198.

It belongs to the Thz kinase family. Requires Mg(2+) as cofactor.

The catalysed reaction is 5-(2-hydroxyethyl)-4-methylthiazole + ATP = 4-methyl-5-(2-phosphooxyethyl)-thiazole + ADP + H(+). It participates in cofactor biosynthesis; thiamine diphosphate biosynthesis; 4-methyl-5-(2-phosphoethyl)-thiazole from 5-(2-hydroxyethyl)-4-methylthiazole: step 1/1. Catalyzes the phosphorylation of the hydroxyl group of 4-methyl-5-beta-hydroxyethylthiazole (THZ). In Citrobacter koseri (strain ATCC BAA-895 / CDC 4225-83 / SGSC4696), this protein is Hydroxyethylthiazole kinase.